The following is a 214-amino-acid chain: Ribosomal RNA small subunit methyltransferase G (214 aa).

S-adenosyl-L-methionine contacts are provided by residues glycine 77, leucine 82, 128–129 (VE), and arginine 143.

The protein belongs to the methyltransferase superfamily. RNA methyltransferase RsmG family.

It localises to the cytoplasm. It carries out the reaction guanosine(527) in 16S rRNA + S-adenosyl-L-methionine = N(7)-methylguanosine(527) in 16S rRNA + S-adenosyl-L-homocysteine. In terms of biological role, specifically methylates the N7 position of guanine in position 527 of 16S rRNA. This Nitrosomonas eutropha (strain DSM 101675 / C91 / Nm57) protein is Ribosomal RNA small subunit methyltransferase G.